A 724-amino-acid chain; its full sequence is Eukaryotic elongation factor 2 kinase (724 aa).

A2 carries the post-translational modification N-acetylalanine. Position 27 is a phosphoserine (S27). S61 is modified (phosphoserine; by autocatalysis). Residues S70, S73, and S77 each carry the phosphoserine modification. The tract at residues 80–93 (FKEAWKHAIEKAKH) is calmodulin-binding. An Alpha-type protein kinase domain is found at 115–325 (RYNAVTGEWL…ICQSMGLTPF (211 aa)). S242 carries the post-translational modification Phosphoserine. 295–301 (GDGNLGV) is a binding site for ATP. Residues T347 and T352 each carry the phosphothreonine; by autocatalysis modification. The segment at 353–476 (EEKCGSPRIR…HESDEDSLGS (124 aa)) is disordered. A Phosphoserine; by MAPK13 and CDK1 modification is found at S358. The segment covering 358–376 (SPRIRTLSSSRPPLLLRLS) has biased composition (low complexity). At S365 the chain carries Phosphoserine; by autocatalysis, RPS6KA1 and RPS6KB1. The span at 385-403 (SDVTFDSLPSSPSSATPHS) shows a compositional bias: polar residues. Position 391 is a phosphoserine (S391). S397 carries the phosphoserine; by AMPK modification. Composition is skewed to basic and acidic residues over residues 421 to 435 (GPRD…RDSE) and 444 to 469 (SEKR…RHES). A phosphoserine mark is found at S434, S444, and S469. S473 is subject to Phosphoserine; by autocatalysis. S476 is modified (phosphoserine). S499 is modified (phosphoserine; by PKA).

Belongs to the protein kinase superfamily. Alpha-type protein kinase family. As to quaternary structure, monomer or homodimer. Interacts with Calmodulin/CALM1; this interaction is strictly required for phosphorylation activity. In terms of processing, autophosphorylated at multiple residues, Thr-347 being the major site. Phosphorylated by AMP-activated protein kinase AMPK at Ser-397 leading to EEF2K activation and protein synthesis inhibition. Phosphorylated by TRPM7 at Ser-77 resulting in improved protein stability, higher EE2F phosphorylated and subsequently reduced rate of protein synthesis. Phosphorylation by other kinases such as CDK1 and MAPK13 at Ser-358 or RPS6KA1 and RPS6KB1 at Ser-365 instead decrease EEF2K activity and promote protein synthesis. Ubiquitously expressed. Particularly abundant in skeletal muscle and heart.

It catalyses the reaction [translation elongation factor 2] + ATP = [translation elongation factor 2]-phosphate + ADP + H(+). Undergoes calcium/calmodulin-dependent intramolecular autophosphorylation, and this results in it becoming partially calcium/calmodulin-independent. Functionally, threonine kinase that regulates protein synthesis by controlling the rate of peptide chain elongation. Upon activation by a variety of upstream kinases including AMPK or TRPM7, phosphorylates the elongation factor EEF2 at a single site, renders it unable to bind ribosomes and thus inactive. In turn, the rate of protein synthesis is reduced. This chain is Eukaryotic elongation factor 2 kinase (Eef2k), found in Mus musculus (Mouse).